A 353-amino-acid polypeptide reads, in one-letter code: Protein-glutamate methylesterase/protein-glutamine glutaminase 3 (353 aa).

One can recognise a Response regulatory domain in the interval 3-120 (KVLIADDSAL…SSSSDMKKVA (118 aa)). Asp54 is subject to 4-aspartylphosphate. One can recognise a CheB-type methylesterase domain in the interval 158–353 (PRPGREVTKA…AREIIRAVNR (196 aa)). Residues Ser173, His200, and Asp296 contribute to the active site.

The protein belongs to the CheB family. Post-translationally, phosphorylated by CheA. Phosphorylation of the N-terminal regulatory domain activates the methylesterase activity.

It is found in the cytoplasm. It catalyses the reaction [protein]-L-glutamate 5-O-methyl ester + H2O = L-glutamyl-[protein] + methanol + H(+). The enzyme catalyses L-glutaminyl-[protein] + H2O = L-glutamyl-[protein] + NH4(+). In terms of biological role, involved in chemotaxis. Part of a chemotaxis signal transduction system that modulates chemotaxis in response to various stimuli. Catalyzes the demethylation of specific methylglutamate residues introduced into the chemoreceptors (methyl-accepting chemotaxis proteins or MCP) by CheR. Also mediates the irreversible deamidation of specific glutamine residues to glutamic acid. The sequence is that of Protein-glutamate methylesterase/protein-glutamine glutaminase 3 from Syntrophomonas wolfei subsp. wolfei (strain DSM 2245B / Goettingen).